We begin with the raw amino-acid sequence, 513 residues long: Cytochrome P450 monooxygenase CYP3 (513 aa).

Residues 1–21 (MLPRSLGHSTSELSPPFDGPN) form a disordered region. Cys-451 is a binding site for heme.

The protein belongs to the cytochrome P450 family. The cofactor is heme.

Its pathway is secondary metabolite biosynthesis. Its function is as follows. Cytochrome P450 monooxygenase; part of the gene cluster that mediates the biosynthesis of a tyrosine-derived cytochalasan acting as a fungal signal recognized by resistant rice plants and leads to avirulence in Pi33 resistant rice cultivars. The first step in the pathway is catalyzed by the hybrid PKS-NRPS ACE1, assisted by the enoyl reductase RAP1, that are responsible for fusion of the tyrosine precursor and the polyketide backbone. The polyketide synthase module (PKS) of ACE1 is responsible for the synthesis of the polyketide backbone and the downstream nonribosomal peptide synthetase (NRPS) amidates the carboxyl end of the polyketide with the tyrosine precursor. Because ACE1 lacks a designated enoylreductase (ER) domain, the required activity is provided the enoyl reductase RAP1. Reduction by the hydrolyase ORFZ, followed by dehydration and intra-molecular Diels-Alder cyclization by the Diels-Alderase ORF3 then yield the required isoindolone-fused macrocycle. A number of oxidative steps catalyzed by the tailoring enzymes identified within the cluster, including cytochrome P450 monooxygenases CYP1 to CYP4, the FAD-linked oxidoreductase OXR2 and the short-chain dehydrogenase/reductase OXR1, are further required to afford the final cytochalasans that confer avirulence and which have still to be identified. The monooxygenase CYP1 has been shown to be a site-selective C-18 hydroxylase whereas the function of CYP3 is the site-selective epoxidation of the C-6/C-7 olefin that is present in some intermediate compounds. Finally, SYN2 and RAP2 are not required for avirulence in Pi33 resistant rice cultivars. This chain is Cytochrome P450 monooxygenase CYP3, found in Pyricularia oryzae (strain 70-15 / ATCC MYA-4617 / FGSC 8958) (Rice blast fungus).